We begin with the raw amino-acid sequence, 819 residues long: DNA mismatch repair protein MutS (819 aa).

An ATP-binding site is contributed by 596 to 603 (GPNMSGKS).

The protein belongs to the DNA mismatch repair MutS family.

This protein is involved in the repair of mismatches in DNA. It is possible that it carries out the mismatch recognition step. This protein has a weak ATPase activity. This Thermosipho melanesiensis (strain DSM 12029 / CIP 104789 / BI429) protein is DNA mismatch repair protein MutS.